A 230-amino-acid chain; its full sequence is Dickkopf-like protein 1 (230 aa).

The first 20 residues, 1–20 (MCRLRVLLLLLPLAFVSSSA), serve as a signal peptide directing secretion. Asn-31, Asn-87, and Asn-102 each carry an N-linked (GlcNAc...) asparagine glycan.

In terms of assembly, interacts with SLXL1; Co-localize in seminiferous tubules. Interacts with SLY. Post-translationally, N-glycosylated during spermatogenesis. Not N-glycosylated in mature sperm. As to expression, testis-specific. Abundant in the seminiferous tubules where it is associated with developing spermatocytes. Expressed only in testis (at protein level). Not detectable on postnatal days 4 and 9 but after day 18 it gradually increased as the development of testes progressed. Expressed at high levels in testis and at weak levels in epididymis.

The protein localises to the secreted. It localises to the cytoplasmic vesicle. The protein resides in the secretory vesicle. Its subcellular location is the acrosome. Its function is as follows. Involved in fertilization by facilitating sperm penetration of the zona pellucida. May promote spermatocyte apoptosis, thereby limiting sperm production. In adults, may reduce testosterone synthesis in Leydig cells. Is not essential either for development or fertility. The chain is Dickkopf-like protein 1 from Mus musculus (Mouse).